Here is a 165-residue protein sequence, read N- to C-terminus: Yapsin-5 (165 aa).

An N-terminal signal peptide occupies residues 1 to 24 (MQLFSILSLLSSLMCSLTVLGSSA). An N-linked (GlcNAc...) asparagine glycan is attached at N57. The region spanning 67–165 (YVVKMEIGTP…TRLSSMTYTY (99 aa)) is the Peptidase A1 domain.

The protein belongs to the peptidase A1 family.

The chain is Yapsin-5 (YPS5) from Saccharomyces cerevisiae (strain ATCC 204508 / S288c) (Baker's yeast).